Here is a 421-residue protein sequence, read N- to C-terminus: UDP-N-acetylglucosamine 1-carboxyvinyltransferase (421 aa).

Residue 22–23 (KN) coordinates phosphoenolpyruvate. Residue R93 coordinates UDP-N-acetyl-alpha-D-glucosamine. Catalysis depends on C117, which acts as the Proton donor. The residue at position 117 (C117) is a 2-(S-cysteinyl)pyruvic acid O-phosphothioketal. UDP-N-acetyl-alpha-D-glucosamine-binding positions include 122–126 (RPVDL), D308, and I330.

It belongs to the EPSP synthase family. MurA subfamily.

The protein resides in the cytoplasm. It catalyses the reaction phosphoenolpyruvate + UDP-N-acetyl-alpha-D-glucosamine = UDP-N-acetyl-3-O-(1-carboxyvinyl)-alpha-D-glucosamine + phosphate. Its pathway is cell wall biogenesis; peptidoglycan biosynthesis. In terms of biological role, cell wall formation. Adds enolpyruvyl to UDP-N-acetylglucosamine. This chain is UDP-N-acetylglucosamine 1-carboxyvinyltransferase, found in Pseudomonas putida (strain ATCC 700007 / DSM 6899 / JCM 31910 / BCRC 17059 / LMG 24140 / F1).